A 411-amino-acid chain; its full sequence is Citrate synthase (411 aa).

Residues histidine 304 and aspartate 363 contribute to the active site.

Belongs to the citrate synthase family.

It catalyses the reaction oxaloacetate + acetyl-CoA + H2O = citrate + CoA + H(+). Its pathway is carbohydrate metabolism; tricarboxylic acid cycle; isocitrate from oxaloacetate: step 1/2. The sequence is that of Citrate synthase (gltA) from Rickettsia conorii subsp. caspia (strain A-167) (Astrakhan rickettsia).